A 134-amino-acid polypeptide reads, in one-letter code: Phosphoribosyl-AMP cyclohydrolase (134 aa).

Residue D80 participates in Mg(2+) binding. C81 serves as a coordination point for Zn(2+). Residues D82 and D84 each coordinate Mg(2+). 2 residues coordinate Zn(2+): C98 and C105.

It belongs to the PRA-CH family. As to quaternary structure, homodimer. Requires Mg(2+) as cofactor. Zn(2+) is required as a cofactor.

The protein localises to the cytoplasm. It carries out the reaction 1-(5-phospho-beta-D-ribosyl)-5'-AMP + H2O = 1-(5-phospho-beta-D-ribosyl)-5-[(5-phospho-beta-D-ribosylamino)methylideneamino]imidazole-4-carboxamide. The protein operates within amino-acid biosynthesis; L-histidine biosynthesis; L-histidine from 5-phospho-alpha-D-ribose 1-diphosphate: step 3/9. Functionally, catalyzes the hydrolysis of the adenine ring of phosphoribosyl-AMP. This is Phosphoribosyl-AMP cyclohydrolase from Herminiimonas arsenicoxydans.